Consider the following 290-residue polypeptide: 4-hydroxybenzoate octaprenyltransferase (290 aa).

Transmembrane regions (helical) follow at residues 41–61 (WPLLAIFVLGTLLMRSAGCAM), 89–109 (WEAVAIAVVLAFISFLLIQPL), 133–153 (FFAIPQAYLGIAFGFGIPMAF), 158–178 (DTVPMLAWVMLIANIFWSVAY), 202–224 (FGRFDVAAVMLCYAATLGIYVWI), and 269–289 (WLGGVLFAGIAAHYLLAGTAG).

Belongs to the UbiA prenyltransferase family. Mg(2+) serves as cofactor.

The protein localises to the cell inner membrane. It catalyses the reaction all-trans-octaprenyl diphosphate + 4-hydroxybenzoate = 4-hydroxy-3-(all-trans-octaprenyl)benzoate + diphosphate. It participates in cofactor biosynthesis; ubiquinone biosynthesis. Functionally, catalyzes the prenylation of para-hydroxybenzoate (PHB) with an all-trans polyprenyl group. Mediates the second step in the final reaction sequence of ubiquinone-8 (UQ-8) biosynthesis, which is the condensation of the polyisoprenoid side chain with PHB, generating the first membrane-bound Q intermediate 3-octaprenyl-4-hydroxybenzoate. This is 4-hydroxybenzoate octaprenyltransferase from Burkholderia ambifaria (strain ATCC BAA-244 / DSM 16087 / CCUG 44356 / LMG 19182 / AMMD) (Burkholderia cepacia (strain AMMD)).